A 207-amino-acid polypeptide reads, in one-letter code: Ribosomal RNA small subunit methyltransferase G (207 aa).

Residues Gly75, Phe80, 126-127 (LE), and Arg140 contribute to the S-adenosyl-L-methionine site.

This sequence belongs to the methyltransferase superfamily. RNA methyltransferase RsmG family.

Its subcellular location is the cytoplasm. It carries out the reaction guanosine(527) in 16S rRNA + S-adenosyl-L-methionine = N(7)-methylguanosine(527) in 16S rRNA + S-adenosyl-L-homocysteine. In terms of biological role, specifically methylates the N7 position of guanine in position 527 of 16S rRNA. In Erythrobacter litoralis (strain HTCC2594), this protein is Ribosomal RNA small subunit methyltransferase G.